A 189-amino-acid polypeptide reads, in one-letter code: ATP synthase subunit b (189 aa).

A helical membrane pass occupies residues 25-45; the sequence is LPVWPEVVIGLICFGIVFFVF.

It belongs to the ATPase B chain family. As to quaternary structure, F-type ATPases have 2 components, F(1) - the catalytic core - and F(0) - the membrane proton channel. F(1) has five subunits: alpha(3), beta(3), gamma(1), delta(1), epsilon(1). F(0) has three main subunits: a(1), b(2) and c(10-14). The alpha and beta chains form an alternating ring which encloses part of the gamma chain. F(1) is attached to F(0) by a central stalk formed by the gamma and epsilon chains, while a peripheral stalk is formed by the delta and b chains.

It is found in the cell membrane. F(1)F(0) ATP synthase produces ATP from ADP in the presence of a proton or sodium gradient. F-type ATPases consist of two structural domains, F(1) containing the extramembraneous catalytic core and F(0) containing the membrane proton channel, linked together by a central stalk and a peripheral stalk. During catalysis, ATP synthesis in the catalytic domain of F(1) is coupled via a rotary mechanism of the central stalk subunits to proton translocation. Functionally, component of the F(0) channel, it forms part of the peripheral stalk, linking F(1) to F(0). This chain is ATP synthase subunit b, found in Streptomyces griseus subsp. griseus (strain JCM 4626 / CBS 651.72 / NBRC 13350 / KCC S-0626 / ISP 5235).